A 312-amino-acid polypeptide reads, in one-letter code: Putative electron transfer flavoprotein subunit YdiR (312 aa).

Residue 254-282 (LYLTLGISGQIQHMVGGNGAKVIVAINKD) participates in FAD binding.

It belongs to the ETF alpha-subunit/FixB family. YdiR and YdiQ form a heterodimer.

May play a role in a redox process. This chain is Putative electron transfer flavoprotein subunit YdiR (ydiR), found in Escherichia coli (strain K12).